The primary structure comprises 575 residues: MSTSSLRRQMKNIVHNYSEAEIKVREATSNDPWGPSSSLMSEIADLTYNVVAFSEIMSMIWKRLNDHGKNWRHVYKAMTLMEYLIKTGSERVSQQCKENMYAVQTLKDFQYVDRDGKDQGVNVREKAKQLVALLRDEDRLREERAHALKTKEKLAQTATASSAAVGSGPPPEAEQAWPQSSGEEELQLQLALAMSKEEADQPPSCGPEDDVQLQLALSLSREEHDKEERIRRGDDLRLQMAIEESKRETGGKEESSLMDLADVFTTPAPPQASDPWGGPASVPTAVPVAAAASDPWGAPAVPPAADPWGGAAPTPASGDPWRPAAPTGPSVDPWGGTPAPAAGEGPTSDPWGSADGGAPVSGPPSSDPWAPAPAFSDPWGGSPAKPSSNGTAVGGFDTEPDEFSDFDRLRTALPTSGSSTGELELLAGEVPARSPGAFDMSGVGGSLAESVGSPPPAATPTPTPPTRKTPESFLGPNAALVDLDSLVSRPGPTPPGAKASNPFLPSGAPATGPSVTNPFQPAPPATLTLNQLRLSPVPPVPGAPPTYISPLGGGPGLPPMMPPGPPAPNTNPFLL.

Arg8, Lys11, Arg25, Asn30, Arg63, and His73 together coordinate a 1,2-diacyl-sn-glycero-3-phospho-(1D-myo-inositol-4,5-bisphosphate). The ENTH domain occupies 12–144 (NIVHNYSEAE…RDEDRLREER (133 aa)). Residues 149-186 (KTKEKLAQTATASSAAVGSGPPPEAEQAWPQSSGEEEL) form a disordered region. A compositionally biased stretch (low complexity) spans 157 to 167 (TATASSAAVGS). UIM domains are found at residues 183–202 (EEEL…ADQP), 208–227 (EDDV…HDKE), and 233–252 (GDDL…TGGK). 2 disordered regions span residues 264–283 (FTTP…ASVP) and 293–575 (SDPW…PFLL). 8 consecutive repeat copies span residues 274-276 (DPW), 294-296 (DPW), 306-308 (DPW), 319-321 (DPW), 332-334 (DPW), 349-351 (DPW), 367-369 (DPW), and 377-379 (DPW). An 8 X 3 AA repeats of D-P-W region spans residues 274 to 379 (DPWGGPASVP…APAPAFSDPW (106 aa)). Positions 306 to 316 (DPWGGAAPTPA) are enriched in low complexity. Residues 333-346 (PWGGTPAPAAGEGP) are compositionally biased toward low complexity. Low complexity predominate over residues 367–379 (DPWAPAPAFSDPW). Ser382 is subject to Phosphoserine. Residues 401–410 (DEFSDFDRLR) carry the [DE]-X(1,2)-F-X-X-[FL]-X-X-X-R motif motif. Phosphoserine is present on residues Ser418 and Ser419. Thr420 is subject to Phosphothreonine. Phosphoserine occurs at positions 434, 446, and 453. The span at 453–467 (SPPPAATPTPTPPTR) shows a compositional bias: pro residues. A phosphothreonine mark is found at Thr459, Thr463, and Thr469. At Ser472 the chain carries Phosphoserine. Residue Thr493 is modified to Phosphothreonine. A run of 2 repeats spans residues 501-503 (NPF) and 517-519 (NPF). The tract at residues 501 to 573 (NPFLPSGAPA…GPPAPNTNPF (73 aa)) is 3 X 3 AA repeats of N-P-F. At Arg533 the chain carries Omega-N-methylarginine. The segment covering 556 to 569 (GLPPMMPPGPPAPN) has biased composition (pro residues). Copy 3 of the repeat occupies 571 to 573 (NPF).

Belongs to the epsin family. Monomer. Binds ITSN1. Binds clathrin, ZBTB16/ZNF145, AP2A1 and AP2A2. Binds ubiquitinated proteins. Interacts with RALBP1 in a complex also containing NUMB and TFAP2A during interphase and mitosis. Interacts with AP2B1. Interacts with UBQLN2. Interacts with REPS2; the interaction is direct. Interacts with EPS15; the interaction is direct. Interacts with ENTREP1. Post-translationally, ubiquitinated. In terms of processing, phosphorylated on serine and/or threonine residues in mitotic cells. Phosphorylation reduces interaction with REPS2, AP-2 and the membrane fraction. Depolarization of synaptosomes results in dephosphorylation. As to expression, ubiquitously expressed. Detected in liver, spleen and testis, and weakly in lung and thymus (at protein level).

The protein resides in the cytoplasm. Its subcellular location is the cell membrane. It is found in the nucleus. It localises to the membrane. The protein localises to the clathrin-coated pit. Functionally, binds to membranes enriched in phosphatidylinositol 4,5-bisphosphate (PtdIns(4,5)P2). Modifies membrane curvature and facilitates the formation of clathrin-coated invaginations. Regulates receptor-mediated endocytosis. The sequence is that of Epsin-1 (Epn1) from Rattus norvegicus (Rat).